The chain runs to 200 residues: ATP-dependent Clp protease proteolytic subunit (200 aa).

The active-site Nucleophile is serine 98. Residue histidine 123 is part of the active site.

Belongs to the peptidase S14 family. As to quaternary structure, fourteen ClpP subunits assemble into 2 heptameric rings which stack back to back to give a disk-like structure with a central cavity, resembling the structure of eukaryotic proteasomes.

It localises to the cytoplasm. The enzyme catalyses Hydrolysis of proteins to small peptides in the presence of ATP and magnesium. alpha-casein is the usual test substrate. In the absence of ATP, only oligopeptides shorter than five residues are hydrolyzed (such as succinyl-Leu-Tyr-|-NHMec, and Leu-Tyr-Leu-|-Tyr-Trp, in which cleavage of the -Tyr-|-Leu- and -Tyr-|-Trp bonds also occurs).. Cleaves peptides in various proteins in a process that requires ATP hydrolysis. Has a chymotrypsin-like activity. Plays a major role in the degradation of misfolded proteins. This chain is ATP-dependent Clp protease proteolytic subunit, found in Deinococcus geothermalis (strain DSM 11300 / CIP 105573 / AG-3a).